A 328-amino-acid chain; its full sequence is Coiled-coil domain-containing protein 54 (328 aa).

The stretch at 93–148 forms a coiled coil; that stretch reads KIQEKTDFFQKQMQVLETKMNVNENKQCATAEDIFSVKEDVDALKKKVTELGNQNS. Threonine 182 is subject to Phosphothreonine.

The chain is Coiled-coil domain-containing protein 54 (CCDC54) from Bos taurus (Bovine).